Consider the following 131-residue polypeptide: Probable flagellum biosynthesis repressor protein FlbT (131 aa).

The protein belongs to the FlbT family.

Has a post-transcriptional repressor function in flagellum biogenesis. Associates with the 5'-UTR of fljK mRNA and promotes its degradation. The protein is Probable flagellum biosynthesis repressor protein FlbT of Caulobacter sp. (strain K31).